We begin with the raw amino-acid sequence, 295 residues long: UDP-N-acetylenolpyruvoylglucosamine reductase (295 aa).

Residues 24–188 (KVGGNAEIFF…LKAVFKVNKG (165 aa)) form the FAD-binding PCMH-type domain. R168 is an active-site residue. S217 acts as the Proton donor in catalysis. E287 is a catalytic residue.

It belongs to the MurB family. Requires FAD as cofactor.

The protein resides in the cytoplasm. It carries out the reaction UDP-N-acetyl-alpha-D-muramate + NADP(+) = UDP-N-acetyl-3-O-(1-carboxyvinyl)-alpha-D-glucosamine + NADPH + H(+). It participates in cell wall biogenesis; peptidoglycan biosynthesis. In terms of biological role, cell wall formation. The polypeptide is UDP-N-acetylenolpyruvoylglucosamine reductase (Rickettsia felis (strain ATCC VR-1525 / URRWXCal2) (Rickettsia azadi)).